We begin with the raw amino-acid sequence, 71 residues long: Small ribosomal subunit protein bS21 (71 aa).

Belongs to the bacterial ribosomal protein bS21 family.

This Acinetobacter baylyi (strain ATCC 33305 / BD413 / ADP1) protein is Small ribosomal subunit protein bS21.